The sequence spans 217 residues: Glycosylphosphatidylinositol anchor biosynthesis protein 11 (217 aa).

N-linked (GlcNAc...) asparagine glycosylation occurs at N20. 6 consecutive transmembrane segments (helical) span residues 41 to 61 (VYVRKSWTLIPFHLLALLYWF), 66 to 86 (DFNLLALLYIMIPTQVIYLIF), 107 to 127 (FITLGACLLLSIPCLAIIVLF), 139 to 159 (WLLALHCCFLTYPAVYDVFNC), 169 to 189 (YFISVVIGCWISCFVIPLDWD), and 197 to 217 (VPLIVGAYLGSFIGFSIGGYI).

This sequence belongs to the PIGF family.

It is found in the endoplasmic reticulum membrane. It functions in the pathway glycolipid biosynthesis; glycosylphosphatidylinositol-anchor biosynthesis. Functionally, acts in the GPI biosynthetic pathway between GlcNAc-PI synthesis and GPI transfer to protein. The polypeptide is Glycosylphosphatidylinositol anchor biosynthesis protein 11 (GPI11) (Kluyveromyces lactis (strain ATCC 8585 / CBS 2359 / DSM 70799 / NBRC 1267 / NRRL Y-1140 / WM37) (Yeast)).